A 715-amino-acid polypeptide reads, in one-letter code: Fatty acid oxidation complex subunit alpha (715 aa).

Positions 1 to 190 are enoyl-CoA hydratase/isomerase; sequence MIYQGKAITV…KVGAVDAVVA (190 aa). D297 lines the substrate pocket. Positions 312 to 715 are 3-hydroxyacyl-CoA dehydrogenase; the sequence is HDAKQAAVLG…MAKNGQRFFN (404 aa). NAD(+) is bound by residues M325, D344, 401–403, K408, and S430; that span reads VVE. The active-site For 3-hydroxyacyl-CoA dehydrogenase activity is H451. N454 is an NAD(+) binding site. Positions 501 and 660 each coordinate substrate.

This sequence in the N-terminal section; belongs to the enoyl-CoA hydratase/isomerase family. The protein in the C-terminal section; belongs to the 3-hydroxyacyl-CoA dehydrogenase family. Heterotetramer of two alpha chains (FadB) and two beta chains (FadA).

It catalyses the reaction a (3S)-3-hydroxyacyl-CoA + NAD(+) = a 3-oxoacyl-CoA + NADH + H(+). The enzyme catalyses a (3S)-3-hydroxyacyl-CoA = a (2E)-enoyl-CoA + H2O. The catalysed reaction is a 4-saturated-(3S)-3-hydroxyacyl-CoA = a (3E)-enoyl-CoA + H2O. It carries out the reaction (3S)-3-hydroxybutanoyl-CoA = (3R)-3-hydroxybutanoyl-CoA. It catalyses the reaction a (3Z)-enoyl-CoA = a 4-saturated (2E)-enoyl-CoA. The enzyme catalyses a (3E)-enoyl-CoA = a 4-saturated (2E)-enoyl-CoA. The protein operates within lipid metabolism; fatty acid beta-oxidation. Its function is as follows. Involved in the aerobic and anaerobic degradation of long-chain fatty acids via beta-oxidation cycle. Catalyzes the formation of 3-oxoacyl-CoA from enoyl-CoA via L-3-hydroxyacyl-CoA. It can also use D-3-hydroxyacyl-CoA and cis-3-enoyl-CoA as substrate. The chain is Fatty acid oxidation complex subunit alpha from Ectopseudomonas oleovorans (Pseudomonas oleovorans).